The chain runs to 90 residues: U7-theraphotoxin-Hhn1g (90 aa).

The N-terminal stretch at 1 to 19 (MKTAIFTVVLALAVFAVLS) is a signal peptide. The propeptide occupies 20 to 50 (FGWEANEKALSEEFTELIHEKEAASETEARE). Intrachain disulfides connect Cys-51–Cys-65, Cys-58–Cys-70, and Cys-64–Cys-81.

Belongs to the neurotoxin 10 (Hwtx-1) family. 13 (Hntx-13) subfamily. As to expression, expressed by the venom gland.

Its subcellular location is the secreted. In terms of biological role, ion channel inhibitor. The protein is U7-theraphotoxin-Hhn1g of Cyriopagopus hainanus (Chinese bird spider).